Here is a 208-residue protein sequence, read N- to C-terminus: Small ribosomal subunit protein uS4 (208 aa).

The region spanning 98 to 159 (LRLDNVAYRL…AARTHIRIAA (62 aa)) is the S4 RNA-binding domain.

This sequence belongs to the universal ribosomal protein uS4 family. In terms of assembly, part of the 30S ribosomal subunit. Contacts protein S5. The interaction surface between S4 and S5 is involved in control of translational fidelity.

Functionally, one of the primary rRNA binding proteins, it binds directly to 16S rRNA where it nucleates assembly of the body of the 30S subunit. Its function is as follows. With S5 and S12 plays an important role in translational accuracy. The sequence is that of Small ribosomal subunit protein uS4 from Acidithiobacillus ferrooxidans (strain ATCC 23270 / DSM 14882 / CIP 104768 / NCIMB 8455) (Ferrobacillus ferrooxidans (strain ATCC 23270)).